A 181-amino-acid chain; its full sequence is Protein GrpE (181 aa).

Residues 1–21 (MNKEQQDLQTEQEAAVETAEL) form a disordered region. Positions 8 to 21 (LQTEQEAAVETAEL) are enriched in low complexity.

It belongs to the GrpE family. Homodimer.

It is found in the cytoplasm. Its function is as follows. Participates actively in the response to hyperosmotic and heat shock by preventing the aggregation of stress-denatured proteins, in association with DnaK and GrpE. It is the nucleotide exchange factor for DnaK and may function as a thermosensor. Unfolded proteins bind initially to DnaJ; upon interaction with the DnaJ-bound protein, DnaK hydrolyzes its bound ATP, resulting in the formation of a stable complex. GrpE releases ADP from DnaK; ATP binding to DnaK triggers the release of the substrate protein, thus completing the reaction cycle. Several rounds of ATP-dependent interactions between DnaJ, DnaK and GrpE are required for fully efficient folding. This Trichlorobacter lovleyi (strain ATCC BAA-1151 / DSM 17278 / SZ) (Geobacter lovleyi) protein is Protein GrpE.